The primary structure comprises 239 residues: Ribosomal RNA large subunit methyltransferase E (239 aa).

The disordered stretch occupies residues 1–20 (MTKAPIAGNRTGRKLGQRVK). A compositionally biased stretch (basic residues) spans 11 to 20 (TGRKLGQRVK). S-adenosyl-L-methionine is bound by residues Gly81, Trp83, Asp104, Asp120, and Asp144. The active-site Proton acceptor is the Lys184.

It belongs to the class I-like SAM-binding methyltransferase superfamily. RNA methyltransferase RlmE family.

The protein localises to the cytoplasm. It catalyses the reaction uridine(2552) in 23S rRNA + S-adenosyl-L-methionine = 2'-O-methyluridine(2552) in 23S rRNA + S-adenosyl-L-homocysteine + H(+). Its function is as follows. Specifically methylates the uridine in position 2552 of 23S rRNA at the 2'-O position of the ribose in the fully assembled 50S ribosomal subunit. The chain is Ribosomal RNA large subunit methyltransferase E from Rhizobium etli (strain ATCC 51251 / DSM 11541 / JCM 21823 / NBRC 15573 / CFN 42).